We begin with the raw amino-acid sequence, 278 residues long: 4-deoxy-L-threo-5-hexosulose-uronate ketol-isomerase (278 aa).

Residues His196, His198, Glu203, and His245 each coordinate Zn(2+).

It belongs to the KduI family. Zn(2+) serves as cofactor.

The enzyme catalyses 5-dehydro-4-deoxy-D-glucuronate = 3-deoxy-D-glycero-2,5-hexodiulosonate. It participates in glycan metabolism; pectin degradation; 2-dehydro-3-deoxy-D-gluconate from pectin: step 4/5. Its function is as follows. Catalyzes the isomerization of 5-dehydro-4-deoxy-D-glucuronate to 3-deoxy-D-glycero-2,5-hexodiulosonate. The protein is 4-deoxy-L-threo-5-hexosulose-uronate ketol-isomerase of Shigella flexneri.